The chain runs to 825 residues: Heterogeneous nuclear ribonucleoprotein U (825 aa).

The residue at position 2 (S2) is an N-acetylserine; partial. S4 is subject to Phosphoserine. An SAP domain is found at 8-42 (VKKLKVSELKEELKKRRLSDKGLKAELMERLQAAL). N6-acetyllysine is present on residues K17 and K21. Residues 41–281 (ALDDEEAGGR…PQPPVEEEDE (241 aa)) form a disordered region. S59 carries the phosphoserine; by PLK1 modification. S66 carries the post-translational modification Phosphoserine. Over residues 72–81 (AGLEQEAAAG) the composition is skewed to low complexity. Composition is skewed to acidic residues over residues 82–95 (GDEEEEEEEEEEEG), 120–134 (PMEEEEAASEDENGD), and 140–153 (EGEDELGDEEEGAG). The span at 159–178 (GEQQPQPPATQQQQPQQQRG) shows a compositional bias: low complexity. K186 carries the N6-acetyllysine modification. S187 is subject to ADP-ribosylserine. Over residues 199–211 (APPGARQGQQQAG) the composition is skewed to low complexity. K215 carries the post-translational modification N6-acetyllysine. Positions 233–266 (GKTEQKGGDKKRGVKRPREDHGRGYFEYIEENKY) are enriched in basic and acidic residues. The residue at position 255 (R255) is a Citrulline. K265 bears the N6-acetyllysine; alternate mark. Residue K265 forms a Glycyl lysine isopeptide (Lys-Gly) (interchain with G-Cter in SUMO1); alternate linkage. K265 participates in a covalent cross-link: Glycyl lysine isopeptide (Lys-Gly) (interchain with G-Cter in SUMO2); alternate. Y266 bears the Phosphotyrosine mark. S267 and S271 each carry phosphoserine. Positions 267-464 (SRAKSPQPPV…VEFNFGQKEK (198 aa)) constitute a B30.2/SPRY domain. T286 is subject to Phosphothreonine. The residue at position 352 (K352) is an N6-acetyllysine. Residues 488 to 672 (PKGPEEKKDC…QKLLEQYKEE (185 aa)) form an ATPase domain region. K495 is covalently cross-linked (Glycyl lysine isopeptide (Lys-Gly) (interchain with G-Cter in SUMO2)). 504–511 (GLPGAGKT) contacts ATP. An N6-acetyllysine; alternate mark is found at K516 and K524. Residues K516 and K524 each participate in a glycyl lysine isopeptide (Lys-Gly) (interchain with G-Cter in SUMO2); alternate cross-link. Residue T532 is modified to Phosphothreonine. Residue K536 forms a Glycyl lysine isopeptide (Lys-Gly) (interchain with G-Cter in SUMO2) linkage. The residue at position 551 (K551) is an N6-acetyllysine. K565 is modified (N6-acetyllysine; alternate). K565 participates in a covalent cross-link: Glycyl lysine isopeptide (Lys-Gly) (interchain with G-Cter in SUMO2); alternate. Residue K574 forms a Glycyl lysine isopeptide (Lys-Gly) (interchain with G-Cter in SUMO2) linkage. The residue at position 582 (T582) is a Phosphothreonine. Residues K609 and K626 each participate in a glycyl lysine isopeptide (Lys-Gly) (interchain with G-Cter in SUMO2) cross-link. Positions 611 to 626 (EDYKQRTQKKAEVEGK) are actin-binding. K635 bears the N6-acetyllysine; alternate mark. Residue K635 forms a Glycyl lysine isopeptide (Lys-Gly) (interchain with G-Cter in SUMO2); alternate linkage. Residues K664 and K670 each participate in a glycyl lysine isopeptide (Lys-Gly) (interchain with G-Cter in SUMO2) cross-link. Basic and acidic residues predominate over residues 671–683 (EESKKALPPEKKQ). Residues 671-749 (EESKKALPPE…GGGGGGSGGI (79 aa)) are disordered. Residue R702 is modified to Omega-N-methylarginine. Positions 710-728 (GGFNMRGGNFRGGAPGNRG) are enriched in gly residues. The segment at 714-739 (MRGGNFRGGAPGNRGGYNRRGNMPQR) is RNA-binding RGG-box. Asymmetric dimethylarginine occurs at positions 715, 720, and 727. R733 and R739 each carry asymmetric dimethylarginine; alternate. 2 positions are modified to omega-N-methylarginine; alternate: R733 and R739. R739 carries the dimethylated arginine; in A2780 ovarian carcinoma cell line modification. A compositionally biased stretch (gly residues) spans 739 to 749 (RGGGGGGSGGI). An asymmetric dimethylarginine mark is found at R755 and R762. The interval 769–799 (GNYNRGGMPNRGNYNQNFRGRGNNRGYKNQS) is disordered. The span at 778-799 (NRGNYNQNFRGRGNNRGYKNQS) shows a compositional bias: low complexity. K814 carries the N6-acetyllysine; alternate modification. Residue K814 forms a Glycyl lysine isopeptide (Lys-Gly) (interchain with G-Cter in SUMO2); alternate linkage.

As to quaternary structure, oligomer (via ATPase domain and RNA-binding RGG-box region); oligomerization occurs upon ATP-binding in a chromatin-associated RNAs (caRNAs)- and transcription-dependent manner and is required for chromatin decompaction. ATP hydrolysis is required to cycle from an oligomeric to monomeric state to compact chromatin. Component of the coding region determinant (CRD)-mediated complex, composed of DHX9, HNRNPU, IGF2BP1, SYNCRIP and YBX1. Identified in the spliceosome C complex. Identified in a IGF2BP1-dependent mRNP granule complex containing untranslated mRNAs. Associates with heterogeneous nuclear ribonucleoprotein (hnRNP) particles. Associates (via middle region) with the C-terminal domain (CTD) RNA polymerase II (Pol II) holoenzyme; this association occurs in a RNA-independent manner. Associates (via middle region) with the core-TFIIH basal transcription factor complex; this association inhibits the CTD phosphorylation of RNA polymerase II holoenzyme by down-regulating TFIIH kinase activity. Associates with the telomerase holoenzyme complex. Associates with spindle microtubules (MTs) in a TPX2-dependent manner. Interacts (via C-terminus) with actin; this interaction is direct and mediates association with the phosphorylated CTD of RNA polymerase II and is disrupted in presence of the long non-coding H19 RNA. Interacts with AURKA. Interacts (via C-terminus) with CBX5; this interaction is, at least in part, RNA-dependent. Interacts with CR2. Interacts with CRY1. Interacts (via C-terminus) with EP300; this interaction enhances DNA-binding to nuclear scaffold/matrix attachment region (S/MAR) elements. Interacts with ERBB4. Interacts with GEMIN5. Interacts with IGF2BP1. Interacts with IGF2BP2 and IGF2BP3. Interacts with NCL; this interaction occurs during mitosis. Interacts (via C-terminus) with NR3C1 (via C-terminus). Interacts with PLK1; this interaction induces phosphorylation of HNRNPU at Ser-59 in mitosis. Interacts with POU3F4. Interacts with SMARCA4; this interaction occurs in embryonic stem cells and stimulates global Pol II-mediated transcription. Interacts (via C-terminus) with TOP2A; this interaction protects the topoisomerase TOP2A from degradation and positively regulates the relaxation of supercoiled DNA by TOP2A in a RNA-dependent manner. Interacts with TPX2; this interaction recruits HNRNPU to spindle microtubules (MTs). Interacts with UBQLN2. Interacts (via RNA-binding RGG-box region) with ZBTB7B; the interaction facilitates the recruitment of long non-coding RNA Blnc1 by ZBTB7B. Interacts with ERCC6. (Microbial infection) Interacts with HIV-1 protein Rev. Post-translationally, cleaved at Asp-100 by CASP3 during T-cell apoptosis, resulting in a loss of DNA- and chromatin-binding activities. Extensively phosphorylated. Phosphorylated on Ser-59 by PLK1 and dephosphorylated by protein phosphatase 2A (PP2A) in mitosis. In terms of processing, arg-739 is dimethylated, probably to asymmetric dimethylarginine. Arg-733 is dimethylated, probably to asymmetric dimethylarginine. Post-translationally, citrullinated by PADI4. As to expression, widely expressed.

Its subcellular location is the nucleus. The protein resides in the nucleus matrix. It is found in the chromosome. It localises to the nucleus speckle. The protein localises to the cytoplasm. Its subcellular location is the cytoskeleton. The protein resides in the microtubule organizing center. It is found in the centrosome. It localises to the centromere. The protein localises to the kinetochore. Its subcellular location is the spindle. The protein resides in the spindle pole. It is found in the midbody. It localises to the cell surface. The protein localises to the cytoplasmic granule. Functionally, DNA- and RNA-binding protein involved in several cellular processes such as nuclear chromatin organization, telomere-length regulation, transcription, mRNA alternative splicing and stability, Xist-mediated transcriptional silencing and mitotic cell progression. Plays a role in the regulation of interphase large-scale gene-rich chromatin organization through chromatin-associated RNAs (caRNAs) in a transcription-dependent manner, and thereby maintains genomic stability. Required for the localization of the long non-coding Xist RNA on the inactive chromosome X (Xi) and the subsequent initiation and maintenance of X-linked transcriptional gene silencing during X-inactivation. Plays a role as a RNA polymerase II (Pol II) holoenzyme transcription regulator. Promotes transcription initiation by direct association with the core-TFIIH basal transcription factor complex for the assembly of a functional pre-initiation complex with Pol II in a actin-dependent manner. Blocks Pol II transcription elongation activity by inhibiting the C-terminal domain (CTD) phosphorylation of Pol II and dissociates from Pol II pre-initiation complex prior to productive transcription elongation. Positively regulates CBX5-induced transcriptional gene silencing and retention of CBX5 in the nucleus. Negatively regulates glucocorticoid-mediated transcriptional activation. Key regulator of transcription initiation and elongation in embryonic stem cells upon leukemia inhibitory factor (LIF) signaling. Involved in the long non-coding RNA H19-mediated Pol II transcriptional repression. Participates in the circadian regulation of the core clock component BMAL1 transcription. Plays a role in the regulation of telomere length. Plays a role as a global pre-mRNA alternative splicing modulator by regulating U2 small nuclear ribonucleoprotein (snRNP) biogenesis. Plays a role in mRNA stability. Component of the CRD-mediated complex that promotes MYC mRNA stabilization. Enhances the expression of specific genes, such as tumor necrosis factor TNFA, by regulating mRNA stability, possibly through binding to the 3'-untranslated region (UTR). Plays a role in mitotic cell cycle regulation. Involved in the formation of stable mitotic spindle microtubules (MTs) attachment to kinetochore, spindle organization and chromosome congression. Phosphorylation at Ser-59 by PLK1 is required for chromosome alignement and segregation and progression through mitosis. Also contributes to the targeting of AURKA to mitotic spindle MTs. Binds to double- and single-stranded DNA and RNA, poly(A), poly(C) and poly(G) oligoribonucleotides. Binds to chromatin-associated RNAs (caRNAs). Associates with chromatin to scaffold/matrix attachment region (S/MAR) elements in a chromatin-associated RNAs (caRNAs)-dependent manner. Binds to the Xist RNA. Binds the long non-coding H19 RNA. Binds to SMN1/2 pre-mRNAs at G/U-rich regions. Binds to small nuclear RNAs (snRNAs). Binds to the 3'-UTR of TNFA mRNA. Binds (via RNA-binding RGG-box region) to the long non-coding Xist RNA; this binding is direct and bridges the Xist RNA and the inactive chromosome X (Xi). Also negatively regulates embryonic stem cell differentiation upon LIF signaling. Required for embryonic development. Binds to brown fat long non-coding RNA 1 (Blnc1); facilitates the recruitment of Blnc1 by ZBTB7B required to drive brown and beige fat development and thermogenesis. In terms of biological role, (Microbial infection) Negatively regulates immunodeficiency virus type 1 (HIV-1) replication by preventing the accumulation of viral mRNA transcripts in the cytoplasm. The chain is Heterogeneous nuclear ribonucleoprotein U from Homo sapiens (Human).